Consider the following 228-residue polypeptide: 5'-methylthioadenosine/S-adenosylhomocysteine nucleosidase (228 aa).

The active-site Proton acceptor is glutamate 11. Substrate contacts are provided by residues glycine 77, isoleucine 151, and 172 to 173 (ME). The Proton donor role is filled by aspartate 196.

This sequence belongs to the PNP/UDP phosphorylase family. MtnN subfamily.

The enzyme catalyses S-adenosyl-L-homocysteine + H2O = S-(5-deoxy-D-ribos-5-yl)-L-homocysteine + adenine. It catalyses the reaction S-methyl-5'-thioadenosine + H2O = 5-(methylsulfanyl)-D-ribose + adenine. It carries out the reaction 5'-deoxyadenosine + H2O = 5-deoxy-D-ribose + adenine. It functions in the pathway amino-acid biosynthesis; L-methionine biosynthesis via salvage pathway; S-methyl-5-thio-alpha-D-ribose 1-phosphate from S-methyl-5'-thioadenosine (hydrolase route): step 1/2. Functionally, catalyzes the irreversible cleavage of the glycosidic bond in both 5'-methylthioadenosine (MTA) and S-adenosylhomocysteine (SAH/AdoHcy) to adenine and the corresponding thioribose, 5'-methylthioribose and S-ribosylhomocysteine, respectively. Also cleaves 5'-deoxyadenosine, a toxic by-product of radical S-adenosylmethionine (SAM) enzymes, into 5-deoxyribose and adenine. This is 5'-methylthioadenosine/S-adenosylhomocysteine nucleosidase from Staphylococcus epidermidis (strain ATCC 12228 / FDA PCI 1200).